A 602-amino-acid polypeptide reads, in one-letter code: Threonine--tRNA ligase (602 aa).

The segment at 208-499 (DHRKLGTELK…LTEHCAGEFP (292 aa)) is catalytic. Residues C300, H351, and H476 each contribute to the Zn(2+) site.

Belongs to the class-II aminoacyl-tRNA synthetase family. In terms of assembly, homodimer. It depends on Zn(2+) as a cofactor.

It localises to the cytoplasm. The catalysed reaction is tRNA(Thr) + L-threonine + ATP = L-threonyl-tRNA(Thr) + AMP + diphosphate + H(+). Catalyzes the attachment of threonine to tRNA(Thr) in a two-step reaction: L-threonine is first activated by ATP to form Thr-AMP and then transferred to the acceptor end of tRNA(Thr). Also edits incorrectly charged L-seryl-tRNA(Thr). The protein is Threonine--tRNA ligase of Campylobacter jejuni subsp. jejuni serotype O:2 (strain ATCC 700819 / NCTC 11168).